We begin with the raw amino-acid sequence, 475 residues long: MKLINTFATELPWACEPVVPQPLREPRLLHLNRGLLAELGLDGVSDTDWLACCGLGQPLPGMQPVAQVYAGHQFGGYSPRLGDGRALLLGEQLATDGQRWDLHLKGAGKTPFSRFGDGRAVLRSSIREYLASEALHALGIPTTRALVLVGSKEPVYREQEETGATVLRTAPSHLRFGHIEYFAWSGQGEKIPALIDYLLRYHFPELENGAELFAEVVRRTARLIAKWQAAGFCHGVLNTDNMSLLGLTLDYGPYGFIDAYVPDFVCNHSDPDGRYALDQQPAVGYWNLQKLAQALAGHVDGDALATSLAQYEHQLMLHYSELMRAKLGLTQWEEEDPALFRQLFQLLASQGVDYHLFLRRLGEVTGTGEWPASLLALLPDPDLWQGWLELYRVRLTREGGEDAVRKAQMDAINPKYVLRNALAQQAIDAAEGGDMTQFERLLAALQQPYDEQPEYADLATPVPQWYCGGELSCSS.

8 residues coordinate ATP: glycine 82, glycine 84, arginine 85, lysine 105, aspartate 117, glycine 118, arginine 168, and arginine 175. Catalysis depends on aspartate 240, which acts as the Proton acceptor. 2 residues coordinate Mg(2+): asparagine 241 and aspartate 250. Position 250 (aspartate 250) interacts with ATP.

This sequence belongs to the SELO family. Mg(2+) serves as cofactor. It depends on Mn(2+) as a cofactor.

The catalysed reaction is L-seryl-[protein] + ATP = 3-O-(5'-adenylyl)-L-seryl-[protein] + diphosphate. The enzyme catalyses L-threonyl-[protein] + ATP = 3-O-(5'-adenylyl)-L-threonyl-[protein] + diphosphate. It carries out the reaction L-tyrosyl-[protein] + ATP = O-(5'-adenylyl)-L-tyrosyl-[protein] + diphosphate. It catalyses the reaction L-histidyl-[protein] + UTP = N(tele)-(5'-uridylyl)-L-histidyl-[protein] + diphosphate. The catalysed reaction is L-seryl-[protein] + UTP = O-(5'-uridylyl)-L-seryl-[protein] + diphosphate. The enzyme catalyses L-tyrosyl-[protein] + UTP = O-(5'-uridylyl)-L-tyrosyl-[protein] + diphosphate. Its function is as follows. Nucleotidyltransferase involved in the post-translational modification of proteins. It can catalyze the addition of adenosine monophosphate (AMP) or uridine monophosphate (UMP) to a protein, resulting in modifications known as AMPylation and UMPylation. The protein is Protein nucleotidyltransferase YdiU of Aeromonas salmonicida (strain A449).